Consider the following 182-residue polypeptide: ATP-dependent protease subunit HslV (182 aa).

Residue threonine 10 is part of the active site. Residues alanine 166, cysteine 169, and serine 172 each contribute to the Na(+) site.

The protein belongs to the peptidase T1B family. HslV subfamily. As to quaternary structure, a double ring-shaped homohexamer of HslV is capped on each side by a ring-shaped HslU homohexamer. The assembly of the HslU/HslV complex is dependent on binding of ATP.

The protein resides in the cytoplasm. It catalyses the reaction ATP-dependent cleavage of peptide bonds with broad specificity.. With respect to regulation, allosterically activated by HslU binding. Functionally, protease subunit of a proteasome-like degradation complex believed to be a general protein degrading machinery. This is ATP-dependent protease subunit HslV from Rickettsia peacockii (strain Rustic).